We begin with the raw amino-acid sequence, 1052 residues long: Focal adhesion kinase 1 (1052 aa).

Positions Met1–Glu27 are disordered. An N-acetylalanine modification is found at Ala2. Tyr5 is subject to Phosphotyrosine. Residues Leu10 to His21 are compositionally biased toward polar residues. Thr13 carries the post-translational modification Phosphothreonine. A phosphoserine mark is found at Ser29 and Ser54. Residues Arg35–Thr355 enclose the FERM domain. A Glycyl lysine isopeptide (Lys-Gly) (interchain with G-Cter in SUMO) cross-link involves residue Lys152. Phosphotyrosine occurs at positions 397 and 407. The residue at position 397 (Tyr397) is a Phosphotyrosine; by autocatalysis. Residues Ile428 to Gly434, Lys454, and Glu500 to Cys502 each bind ATP. Residues Gly431–Leu680 enclose the Protein kinase domain. Asp546 acts as the Proton acceptor in catalysis. The residue at position 570 (Tyr570) is a Phosphotyrosine. Residues Tyr576 and Tyr577 each carry the phosphotyrosine; by RET and SRC modification. The residue at position 580 (Ser580) is a Phosphoserine. The segment covering Val685–Arg697 has biased composition (basic and acidic residues). Disordered regions lie at residues Val685–Gln734 and Val837–Asn921. The interval Gly707–His1052 is interaction with TGFB1I1. Ser722 bears the Phosphoserine mark. A Phosphoserine; by CDK5 modification is found at Ser732. A compositionally biased stretch (basic and acidic residues) spans Val837 to Gly849. Ser843 is subject to Phosphoserine. Tyr861 is modified (phosphotyrosine). A compositionally biased stretch (pro residues) spans Pro869–Gly880. A compositionally biased stretch (polar residues) spans Ser886–Asp896. Ser910 is modified (phosphoserine). Positions Pro912–His1052 are interaction with ARHGEF28. Thr914 bears the Phosphothreonine mark. Tyr925 carries the phosphotyrosine; by SRC modification.

The protein belongs to the protein kinase superfamily. Tyr protein kinase family. FAK subfamily. As to quaternary structure, interacts with GIT1. Component of a complex that contains at least FER, CTTN and PTK2/FAK1. Interacts with BMX. Interacts with STEAP4. Interacts with ZFYVE21. Interacts with ESR1. Interacts with FGR, FLT4 and RET. Interacts with EPHA2 in resting cells; activation of EPHA2 recruits PTPN11, leading to dephosphorylation of PTK2/FAK1 and dissociation of the complex. Interacts with EPHA1 (kinase activity-dependent). Interacts with MISP. Interacts with PIAS1. Interacts with ARHGAP26 and SHC1. Interacts with RB1CC1; this inhibits PTK2/FAK1 activity and activation of downstream signaling pathways. Interacts with P53/TP53. Interacts with STAT1. Interacts with WASL. Interacts with ARHGEF7. Interacts with DCC. Interacts (via first Pro-rich region) with CAS family members (via SH3 domain), including BCAR1, BCAR3 and CASS4. Interacts with NEDD9 (via C-terminus). Interacts with SORBS1. Interacts with ARHGEF28. Interacts with SHB. Part of a complex composed of THSD1, PTK2/FAK1, TLN1 and VCL. Interacts with PXN and TLN1. Interacts with TGFB1I1. Interacts with PIK3R1 or PIK3R2. Interacts with SRC, GRB2 and GRB7. Interacts with LPXN (via LD motif 3). Interacts with CD36. Interacts with EMP2; regulates PTK2 activation and localization. Interacts with DSCAM. Interacts with AMBRA1. Interacts (when tyrosine-phosphorylated) with tensin TNS1; the interaction is increased by phosphorylation of TNS1. Post-translationally, phosphorylated on tyrosine residues upon activation, e.g. upon integrin signaling. Tyr-397 is the major autophosphorylation site, but other kinases can also phosphorylate this residue. Phosphorylation at Tyr-397 promotes interaction with SRC and SRC family members, leading to phosphorylation at Tyr-576, Tyr-577 and at additional tyrosine residues. FGR promotes phosphorylation at Tyr-397 and Tyr-576. FER promotes phosphorylation at Tyr-577, Tyr-861 and Tyr-925, even when cells are not adherent. Tyr-397, Tyr-576 and Ser-722 are phosphorylated only when cells are adherent. Phosphorylation at Tyr-397 is important for interaction with BMX, PIK3R1 and SHC1. Phosphorylation at Tyr-925 is important for interaction with GRB2. Dephosphorylated by PTPN11; PTPN11 is recruited to PTK2 via EPHA2 (tyrosine phosphorylated). Microtubule-induced dephosphorylation at Tyr-397 is crucial for the induction of focal adhesion disassembly; this dephosphorylation could be catalyzed by PTPN11 and regulated by ZFYVE21. Phosphorylation on tyrosine residues is enhanced by NTN1. Sumoylated; this enhances autophosphorylation.

The protein resides in the cell junction. The protein localises to the focal adhesion. It localises to the cell membrane. It is found in the cytoplasm. Its subcellular location is the perinuclear region. The protein resides in the cell cortex. The protein localises to the cytoskeleton. It localises to the microtubule organizing center. It is found in the centrosome. Its subcellular location is the nucleus. The protein resides in the cilium basal body. It catalyses the reaction L-tyrosyl-[protein] + ATP = O-phospho-L-tyrosyl-[protein] + ADP + H(+). Its activity is regulated as follows. Subject to autoinhibition, mediated by interactions between the FERM domain and the kinase domain. Activated by autophosphorylation at Tyr-397. This promotes interaction with SRC and phosphorylation at Tyr-576 and Tyr-577 in the kinase activation loop by SRC. Phosphorylation at Tyr-397, Tyr-576 and Tyr-577 is required for maximal kinase activity. In terms of biological role, non-receptor protein-tyrosine kinase that plays an essential role in regulating cell migration, adhesion, spreading, reorganization of the actin cytoskeleton, formation and disassembly of focal adhesions and cell protrusions, cell cycle progression, cell proliferation and apoptosis. Required for early embryonic development and placenta development. Required for embryonic angiogenesis, normal cardiomyocyte migration and proliferation, and normal heart development. Regulates axon growth and neuronal cell migration, axon branching and synapse formation; required for normal development of the nervous system. Plays a role in osteogenesis and differentiation of osteoblasts. Functions in integrin signal transduction, but also in signaling downstream of numerous growth factor receptors, G-protein coupled receptors (GPCR), EPHA2, netrin receptors and LDL receptors. Forms multisubunit signaling complexes with SRC and SRC family members upon activation; this leads to the phosphorylation of additional tyrosine residues, creating binding sites for scaffold proteins, effectors and substrates. Regulates numerous signaling pathways. Promotes activation of phosphatidylinositol 3-kinase and the AKT1 signaling cascade. Promotes activation of MAPK1/ERK2, MAPK3/ERK1 and the MAP kinase signaling cascade. Promotes localized and transient activation of guanine nucleotide exchange factors (GEFs) and GTPase-activating proteins (GAPs), and thereby modulates the activity of Rho family GTPases. Signaling via CAS family members mediates activation of RAC1. Phosphorylates NEDD9 following integrin stimulation. Recruits the ubiquitin ligase MDM2 to P53/TP53 in the nucleus, and thereby regulates P53/TP53 activity, P53/TP53 ubiquitination and proteasomal degradation. Phosphorylates SRC; this increases SRC kinase activity. Phosphorylates ACTN1, ARHGEF7, GRB7, RET and WASL. Promotes phosphorylation of PXN and STAT1; most likely PXN and STAT1 are phosphorylated by a SRC family kinase that is recruited to autophosphorylated PTK2/FAK1, rather than by PTK2/FAK1 itself. Promotes phosphorylation of BCAR1; GIT2 and SHC1; this requires both SRC and PTK2/FAK1. Promotes phosphorylation of BMX and PIK3R1. Does not contain a kinase domain and inhibits PTK2/FAK1 phosphorylation and signaling. Its enhanced expression can attenuate the nuclear accumulation of LPXN and limit its ability to enhance serum response factor (SRF)-dependent gene transcription. This Mus musculus (Mouse) protein is Focal adhesion kinase 1.